We begin with the raw amino-acid sequence, 346 residues long: Holliday junction branch migration complex subunit RuvB (346 aa).

Residues 1-181 (MSDRNPLIDA…FGIPVRLNFY (181 aa)) are large ATPase domain (RuvB-L). Residues L20, R21, G62, K65, T66, T67, 128 to 130 (EDF), R171, Y181, and R218 contribute to the ATP site. T66 provides a ligand contact to Mg(2+). The interval 182–252 (TVEELEYIVR…IADEALSRLE (71 aa)) is small ATPAse domain (RuvB-S). The segment at 255-346 (NRGLDQLDRR…SQYGLFMEDE (92 aa)) is head domain (RuvB-H). DNA is bound by residues R291, R310, and R315.

Belongs to the RuvB family. In terms of assembly, homohexamer. Forms an RuvA(8)-RuvB(12)-Holliday junction (HJ) complex. HJ DNA is sandwiched between 2 RuvA tetramers; dsDNA enters through RuvA and exits via RuvB. An RuvB hexamer assembles on each DNA strand where it exits the tetramer. Each RuvB hexamer is contacted by two RuvA subunits (via domain III) on 2 adjacent RuvB subunits; this complex drives branch migration. In the full resolvosome a probable DNA-RuvA(4)-RuvB(12)-RuvC(2) complex forms which resolves the HJ.

The protein localises to the cytoplasm. The catalysed reaction is ATP + H2O = ADP + phosphate + H(+). In terms of biological role, the RuvA-RuvB-RuvC complex processes Holliday junction (HJ) DNA during genetic recombination and DNA repair, while the RuvA-RuvB complex plays an important role in the rescue of blocked DNA replication forks via replication fork reversal (RFR). RuvA specifically binds to HJ cruciform DNA, conferring on it an open structure. The RuvB hexamer acts as an ATP-dependent pump, pulling dsDNA into and through the RuvAB complex. RuvB forms 2 homohexamers on either side of HJ DNA bound by 1 or 2 RuvA tetramers; 4 subunits per hexamer contact DNA at a time. Coordinated motions by a converter formed by DNA-disengaged RuvB subunits stimulates ATP hydrolysis and nucleotide exchange. Immobilization of the converter enables RuvB to convert the ATP-contained energy into a lever motion, pulling 2 nucleotides of DNA out of the RuvA tetramer per ATP hydrolyzed, thus driving DNA branch migration. The RuvB motors rotate together with the DNA substrate, which together with the progressing nucleotide cycle form the mechanistic basis for DNA recombination by continuous HJ branch migration. Branch migration allows RuvC to scan DNA until it finds its consensus sequence, where it cleaves and resolves cruciform DNA. The protein is Holliday junction branch migration complex subunit RuvB of Brucella suis (strain ATCC 23445 / NCTC 10510).